The sequence spans 447 residues: Phosphoglucosamine mutase (447 aa).

S102 acts as the Phosphoserine intermediate in catalysis. The Mg(2+) site is built by S102, D241, D243, and D245. S102 is modified (phosphoserine).

The protein belongs to the phosphohexose mutase family. Mg(2+) is required as a cofactor. Post-translationally, activated by phosphorylation.

The enzyme catalyses alpha-D-glucosamine 1-phosphate = D-glucosamine 6-phosphate. Catalyzes the conversion of glucosamine-6-phosphate to glucosamine-1-phosphate. The chain is Phosphoglucosamine mutase from Delftia acidovorans (strain DSM 14801 / SPH-1).